A 143-amino-acid chain; its full sequence is Small ribosomal subunit protein uS11c (143 aa).

Belongs to the universal ribosomal protein uS11 family. Part of the 30S ribosomal subunit.

It localises to the plastid. The protein localises to the chloroplast. This is Small ribosomal subunit protein uS11c from Cenchrus americanus (Pearl millet).